The sequence spans 674 residues: Protein asunder (674 aa).

A coiled-coil region spans residues 516 to 538 (HKAKDQYRLLYRELEQLIQLNAS). Residues 560–579 (PSKSEAGTANLRSFTESPLS) form a disordered region. A compositionally biased stretch (polar residues) spans 564-577 (EAGTANLRSFTESP). The short motif at 601–607 (LKASKRR) is the Nuclear localization signal (NLS) element.

This sequence belongs to the Integrator subunit 13 family. As to quaternary structure, belongs to the multiprotein complex Integrator, at least composed of IntS1, IntS2, IntS3, IntS4, omd/IntS5, IntS6, defl/IntS7, IntS8, IntS9, IntS10, IntS11, IntS12, asun/IntS13, IntS14 and IntS15. The core complex associates with protein phosphatase 2A subunits mts/PP2A and Pp2A-29B, to form the Integrator-PP2A (INTAC) complex. Post-translationally, phosphorylated.

It localises to the nucleus. Its subcellular location is the cytoplasm. The protein localises to the perinuclear region. Its function is as follows. Component of the integrator complex, a multiprotein complex that terminates RNA polymerase II (Pol II) transcription in the promoter-proximal region of genes. The integrator complex provides a quality checkpoint during transcription elongation by driving premature transcription termination of transcripts that are unfavorably configured for transcriptional elongation: the complex terminates transcription by (1) catalyzing dephosphorylation of the C-terminal domain (CTD) of Pol II subunit Polr2A/Rbp1 and Spt5, and (2) degrading the exiting nascent RNA transcript via endonuclease activity. The integrator complex is also involved in the 3'-end processing of the U7 snRNA, and also the spliceosomal snRNAs U1, U2, U4 and U5. The protein is Protein asunder (asun) of Drosophila pseudoobscura pseudoobscura (Fruit fly).